A 492-amino-acid polypeptide reads, in one-letter code: GTPase Der (492 aa).

2 consecutive EngA-type G domains span residues 3–166 (PVVA…MDDV) and 205–378 (IKLA…DSST). Residues 9–16 (GRPNVGKS), 56–60 (DTGGI), 118–121 (NKTD), 211–218 (GRPNVGKS), 258–262 (DTAGV), and 323–326 (NKWD) each bind GTP. A KH-like domain is found at 379-463 (RRVSTALLTR…PIRIQFKEGA (85 aa)).

This sequence belongs to the TRAFAC class TrmE-Era-EngA-EngB-Septin-like GTPase superfamily. EngA (Der) GTPase family. Associates with the 50S ribosomal subunit.

GTPase that plays an essential role in the late steps of ribosome biogenesis. The protein is GTPase Der of Cronobacter sakazakii (strain ATCC BAA-894) (Enterobacter sakazakii).